Consider the following 401-residue polypeptide: Voltage-gated potassium channel subunit beta-1 (401 aa).

NADP(+) contacts are provided by threonine 90, tryptophan 91, glutamine 97, and aspartate 119. Tyrosine 124 serves as the catalytic Proton donor/acceptor. Residues asparagine 192, serine 222, arginine 223, glutamine 248, tryptophan 277, serine 278, proline 279, leucine 280, alanine 281, cysteine 282, lysine 288, arginine 298, glycine 357, serine 359, glutamine 363, glutamate 366, and asparagine 367 each coordinate NADP(+).

This sequence belongs to the shaker potassium channel beta subunit family. In terms of assembly, homotetramer. Interaction with tetrameric potassium channel alpha subunits gives rise to a heterooctamer.

It localises to the cytoplasm. Its subcellular location is the membrane. The protein resides in the cell membrane. The enzyme catalyses a primary alcohol + NADP(+) = an aldehyde + NADPH + H(+). The catalysed reaction is a secondary alcohol + NADP(+) = a ketone + NADPH + H(+). Functionally, regulatory subunit of the voltage-gated potassium (Kv) channels composed of pore-forming and potassium-conducting alpha subunits and of regulatory beta subunits. The beta-1/KCNAB1 cytoplasmic subunit mediates closure of delayed rectifier potassium channels by physically obstructing the pore via its N-terminal domain and increases the speed of channel closure for other family members. Promotes the inactivation of KCNA1, KCNA2, KCNA4, KCNA5 and KCNA6 alpha subunit-containing channels. Displays nicotinamide adenine dinucleotide phosphate (NADPH)-dependent aldoketoreductase activity by catalyzing the NADPH-dependent reduction of a variety of endogenous aldehydes and ketones. The binding of NADPH is required for efficient down-regulation of potassium channel activity. Oxidation of the bound NADPH restrains N-terminal domain from blocking the channel, thereby decreasing N-type inactivation of potassium channel activity. The protein is Voltage-gated potassium channel subunit beta-1 (KCNAB1) of Gallus gallus (Chicken).